The sequence spans 27 residues: CD59 glycoprotein (27 aa).

2 disulfide bridges follow: Cys3/Cys25 and Cys6/Cys12. A glycan (N-linked (GlcNAc...) asparagine) is linked at Asn17.

Interacts with T-cell surface antigen CD2. N- and O-glycosylated. As to expression, expressed in erythrocytes and lymphocytes. Not detected in platelets.

It localises to the cell membrane. The protein localises to the secreted. Functionally, potent inhibitor of the complement membrane attack complex (MAC) action, which protects self-cells from damage during complement activation. Acts by binding to the beta-haipins of C8 (C8A and C8B) components of the assembling MAC, forming an intermolecular beta-sheet that prevents incorporation of the multiple copies of C9 required for complete formation of the osmolytic pore. The polypeptide is CD59 glycoprotein (Ovis aries (Sheep)).